Here is an 805-residue protein sequence, read N- to C-terminus: Nitrite reductase [NAD(P)H] (805 aa).

Residue 43-79 participates in FAD binding; that stretch reads YNRILLSKVLQGDTDIKDITLNDWDWYEENNIQLYTN. 193–223 contributes to the NADP(+) binding site; it reads LQNELEKQGMTFLLEKQTEEIVGDDRVEGLR. Residues Cys418, Cys420, Cys453, and Cys456 each coordinate [2Fe-2S] cluster. Residues Cys635, Cys641, Cys675, and Cys679 each coordinate [4Fe-4S] cluster. Cys679 is a binding site for siroheme.

Belongs to the nitrite and sulfite reductase 4Fe-4S domain family. Homodimer. Requires siroheme as cofactor. [2Fe-2S] cluster serves as cofactor. [4Fe-4S] cluster is required as a cofactor. It depends on FAD as a cofactor.

It catalyses the reaction NH4(+) + 3 NADP(+) + 2 H2O = nitrite + 3 NADPH + 5 H(+). The catalysed reaction is NH4(+) + 3 NAD(+) + 2 H2O = nitrite + 3 NADH + 5 H(+). It functions in the pathway nitrogen metabolism; nitrate reduction (assimilation). Required for nitrite assimilation. This chain is Nitrite reductase [NAD(P)H] (nasD), found in Bacillus subtilis (strain 168).